Consider the following 245-residue polypeptide: Homeobox protein Hox-A4a (245 aa).

Residues 34-99 (DYYERPKDPG…HGPRLTTESC (66 aa)) form a disordered region. The span at 35–51 (YYERPKDPGFPHHEEAS) shows a compositional bias: basic and acidic residues. Composition is skewed to polar residues over residues 53–73 (PRSN…NDLN) and 82–99 (QPQS…TESC). Positions 126–131 (VYPWMK) match the Antp-type hexapeptide motif. Residues 147–206 (PKRSRTAYTRQQALELEKEFHFNRYLTRRRRVEIAHTMCLSERQVKIWFQNRRMKWKKDH) constitute a DNA-binding region (homeobox). The tract at residues 205-245 (DHKLPNTKIRSSSSAPSNHHVKTDATQQQQTLLPTPCSSNL) is disordered. A compositionally biased stretch (polar residues) spans 212–221 (KIRSSSSAPS). Residues 230-245 (TQQQQTLLPTPCSSNL) are compositionally biased toward low complexity.

This sequence belongs to the Antp homeobox family. Deformed subfamily.

The protein resides in the nucleus. In terms of biological role, sequence-specific transcription factor which is part of a developmental regulatory system that provides cells with specific positional identities on the anterior-posterior axis. In Danio rerio (Zebrafish), this protein is Homeobox protein Hox-A4a (hoxa4a).